We begin with the raw amino-acid sequence, 570 residues long: PTS system lactose-specific EIICB component (570 aa).

The PTS EIIC type-3 domain occupies Ile9–Phe410. Transmembrane regions (helical) follow at residues Gly31 to Val51, Ala65 to Thr85, Ile104 to Pro124, Ala133 to Val153, Phe178 to Ile198, Gly223 to His243, Met283 to Trp303, Val340 to Val360, and Ile382 to Val402. A PTS EIIB type-3 domain is found at Gln467–Asn570. Residue Cys474 is the Phosphocysteine intermediate; for EIIB activity of the active site. A Phosphocysteine; by EIIA modification is found at Cys474.

The protein resides in the cell membrane. The enzyme catalyses lactose(out) + N(pros)-phospho-L-histidyl-[protein] = lactose 6-phosphate(in) + L-histidyl-[protein]. In terms of biological role, the phosphoenolpyruvate-dependent sugar phosphotransferase system (sugar PTS), a major carbohydrate active transport system, catalyzes the phosphorylation of incoming sugar substrates concomitantly with their translocation across the cell membrane. The enzyme II LacEF PTS system is involved in lactose transport. This chain is PTS system lactose-specific EIICB component, found in Staphylococcus aureus (strain MSSA476).